We begin with the raw amino-acid sequence, 141 residues long: Large ribosomal subunit protein uL6 (141 aa).

Belongs to the universal ribosomal protein uL6 family.

The protein is Large ribosomal subunit protein uL6 of Haemonchus contortus (Barber pole worm).